Reading from the N-terminus, the 166-residue chain is Large ribosomal subunit protein uL11z (166 aa).

Belongs to the universal ribosomal protein uL11 family.

In terms of biological role, binds directly to 26S ribosomal RNA. In Arabidopsis thaliana (Mouse-ear cress), this protein is Large ribosomal subunit protein uL11z (RPL12A).